Consider the following 138-residue polypeptide: MNSTFTSQPLLNRSEPRVFKEFYRLVIGCNPAWQVMAQVSLGEILRSKDADAYSCINAKRVDLLLVDGNCRPRHVVEYQRGAHHQGAAAARDAVKKAALRCAGIGYYEVVAGQTTPSDLRRLVEKLVEKPELPICAPD.

The signal sequence occupies residues 1-37; it reads MNSTFTSQPLLNRSEPRVFKEFYRLVIGCNPAWQVMA.

This sequence to H.influenzae HI_1631.

This is an uncharacterized protein from Sinorhizobium fredii (strain NBRC 101917 / NGR234).